The following is a 496-amino-acid chain: METYILSLDQGTTSSRAILFNKEGKIVHSAQKEFTQYFPHPGWVEHNANEIWGSVLAVIASVISESGISASQIAGIGITNQRETTVVWDKDTGSPVYNAIVWQSRQTSGICEELREKGYNDKFREKTGLLIDPYFSGTKVKWILDNVEGAREKAEKGELLFGTIDTWLIWKMSGGKAHVTDYSNASRTLMFNIYDLKWDDELLDILGVPKSMLPEVKPSSHVYAETVDYHFFGKNIPIAGAAGDQQSALFGQACFEEGMGKNTYGTGCFMLMNTGEKAIKSEHGLLTTIAWGIDGKVNYALEGSIFVAGSAIQWLRDGLRMFQDSSLSESYAEKVDSTDGVYVVPAFVGLGTPYWDSDVRGSVFGLTRGTTKEHFIRATLESLAYQTKDVLDAMEADSNISLKTLRVDGGAVKNNFLMQFQGDLLNVPVERPEINETTALGAAYLAGIAVGFWKDRSEIANQWNLDKRFEPELEEEKRNELYKGWQKAVKAAMAFK.

Thr12 serves as a coordination point for ADP. ATP contacts are provided by Thr12, Thr13, and Ser14. Sn-glycerol 3-phosphate is bound at residue Thr12. Arg16 serves as a coordination point for ADP. 3 residues coordinate sn-glycerol 3-phosphate: Arg82, Glu83, and Tyr134. Residues Arg82, Glu83, and Tyr134 each coordinate glycerol. His230 carries the post-translational modification Phosphohistidine; by HPr. Residue Asp244 coordinates sn-glycerol 3-phosphate. Residues Asp244 and Gln245 each coordinate glycerol. 2 residues coordinate ADP: Thr266 and Gly309. Residues Thr266, Gly309, Gln313, and Gly410 each coordinate ATP. ADP is bound by residues Gly410 and Asn414.

This sequence belongs to the FGGY kinase family. In terms of assembly, homotetramer and homodimer (in equilibrium). In terms of processing, the phosphoenolpyruvate-dependent sugar phosphotransferase system (PTS), including enzyme I, and histidine-containing protein (HPr) are required for the phosphorylation, which leads to the activation of the enzyme.

The catalysed reaction is glycerol + ATP = sn-glycerol 3-phosphate + ADP + H(+). It participates in polyol metabolism; glycerol degradation via glycerol kinase pathway; sn-glycerol 3-phosphate from glycerol: step 1/1. Activated by phosphorylation and inhibited by fructose 1,6-bisphosphate (FBP). In terms of biological role, key enzyme in the regulation of glycerol uptake and metabolism. Catalyzes the phosphorylation of glycerol to yield sn-glycerol 3-phosphate. This chain is Glycerol kinase, found in Bacillus subtilis (strain 168).